The primary structure comprises 184 residues: Adenine phosphoribosyltransferase (184 aa).

Belongs to the purine/pyrimidine phosphoribosyltransferase family. As to quaternary structure, homodimer.

It is found in the cytoplasm. The enzyme catalyses AMP + diphosphate = 5-phospho-alpha-D-ribose 1-diphosphate + adenine. The protein operates within purine metabolism; AMP biosynthesis via salvage pathway; AMP from adenine: step 1/1. In terms of biological role, catalyzes a salvage reaction resulting in the formation of AMP, that is energically less costly than de novo synthesis. This is Adenine phosphoribosyltransferase from Acidovorax sp. (strain JS42).